Here is a 398-residue protein sequence, read N- to C-terminus: Bifunctional enzyme IspD/IspF (398 aa).

The tract at residues 1–234 is 2-C-methyl-D-erythritol 4-phosphate cytidylyltransferase; the sequence is MSNSKRTAAI…SRLGALLGDI (234 aa). A 2-C-methyl-D-erythritol 2,4-cyclodiphosphate synthase region spans residues 235–398; sequence RTGTGYDVHA…LPWGTNGLAD (164 aa). Residues Asp241 and His243 each contribute to the a divalent metal cation site. 4-CDP-2-C-methyl-D-erythritol 2-phosphate is bound by residues 241–243 and 267–268; these read DVH and HS. His275 serves as a coordination point for a divalent metal cation. Residues 289–291, 365–368, Phe372, and Arg375 each bind 4-CDP-2-C-methyl-D-erythritol 2-phosphate; these read DIG and TTSE.

It in the N-terminal section; belongs to the IspD/TarI cytidylyltransferase family. IspD subfamily. This sequence in the C-terminal section; belongs to the IspF family. The cofactor is a divalent metal cation.

It catalyses the reaction 2-C-methyl-D-erythritol 4-phosphate + CTP + H(+) = 4-CDP-2-C-methyl-D-erythritol + diphosphate. It carries out the reaction 4-CDP-2-C-methyl-D-erythritol 2-phosphate = 2-C-methyl-D-erythritol 2,4-cyclic diphosphate + CMP. It functions in the pathway isoprenoid biosynthesis; isopentenyl diphosphate biosynthesis via DXP pathway; isopentenyl diphosphate from 1-deoxy-D-xylulose 5-phosphate: step 2/6. The protein operates within isoprenoid biosynthesis; isopentenyl diphosphate biosynthesis via DXP pathway; isopentenyl diphosphate from 1-deoxy-D-xylulose 5-phosphate: step 4/6. In terms of biological role, bifunctional enzyme that catalyzes the formation of 4-diphosphocytidyl-2-C-methyl-D-erythritol from CTP and 2-C-methyl-D-erythritol 4-phosphate (MEP) (IspD), and catalyzes the conversion of 4-diphosphocytidyl-2-C-methyl-D-erythritol 2-phosphate (CDP-ME2P) to 2-C-methyl-D-erythritol 2,4-cyclodiphosphate (ME-CPP) with a corresponding release of cytidine 5-monophosphate (CMP) (IspF). The protein is Bifunctional enzyme IspD/IspF of Rhodopseudomonas palustris (strain BisB18).